The primary structure comprises 494 residues: Probable cobyric acid synthase (494 aa).

The 199-residue stretch at 249 to 447 (SVRIAVIRLP…LHGIFFNRRF (199 aa)) folds into the GATase cobBQ-type domain. Residue Cys-331 is the Nucleophile of the active site. His-439 is a catalytic residue.

It belongs to the CobB/CobQ family. CobQ subfamily.

The protein operates within cofactor biosynthesis; adenosylcobalamin biosynthesis. In terms of biological role, catalyzes amidations at positions B, D, E, and G on adenosylcobyrinic A,C-diamide. NH(2) groups are provided by glutamine, and one molecule of ATP is hydrogenolyzed for each amidation. This chain is Probable cobyric acid synthase, found in Methanopyrus kandleri (strain AV19 / DSM 6324 / JCM 9639 / NBRC 100938).